Consider the following 735-residue polypeptide: Ion-translocating oxidoreductase complex subunit C (735 aa).

2 consecutive 4Fe-4S ferredoxin-type domains span residues 368 to 397 (MGAP…QQLY) and 407 to 436 (KATA…VQYF). Positions 377, 380, 383, 387, 416, 419, 422, and 426 each coordinate [4Fe-4S] cluster. Residues 534–711 (QARAKQAAHP…EPVEPADPRK (178 aa)) form a disordered region.

It belongs to the 4Fe4S bacterial-type ferredoxin family. RnfC subfamily. The complex is composed of six subunits: RsxA, RsxB, RsxC, RsxD, RsxE and RsxG. The cofactor is [4Fe-4S] cluster.

Its subcellular location is the cell inner membrane. In terms of biological role, part of a membrane-bound complex that couples electron transfer with translocation of ions across the membrane. Required to maintain the reduced state of SoxR. The chain is Ion-translocating oxidoreductase complex subunit C from Salmonella paratyphi A (strain ATCC 9150 / SARB42).